We begin with the raw amino-acid sequence, 232 residues long: Orotidine 5'-phosphate decarboxylase (232 aa).

Substrate is bound by residues Asp-11, Lys-32, 59–68 (DLKFHDIPNT), Thr-118, Arg-180, Gln-189, Gly-209, and Arg-210. Lys-61 (proton donor) is an active-site residue.

This sequence belongs to the OMP decarboxylase family. Type 1 subfamily. In terms of assembly, homodimer.

The catalysed reaction is orotidine 5'-phosphate + H(+) = UMP + CO2. It participates in pyrimidine metabolism; UMP biosynthesis via de novo pathway; UMP from orotate: step 2/2. Its function is as follows. Catalyzes the decarboxylation of orotidine 5'-monophosphate (OMP) to uridine 5'-monophosphate (UMP). This Gloeothece citriformis (strain PCC 7424) (Cyanothece sp. (strain PCC 7424)) protein is Orotidine 5'-phosphate decarboxylase.